A 268-amino-acid chain; its full sequence is Putative F-box protein At3g23420 (268 aa).

The F-box domain occupies 5–51 (PRDLSDLPRNMAEEVLSRVPMTSLRRLRFTCKKWNTLSRCRSFAKKH).

This Arabidopsis thaliana (Mouse-ear cress) protein is Putative F-box protein At3g23420.